Reading from the N-terminus, the 325-residue chain is Pyruvate dehydrogenase E1 component subunit beta (325 aa).

Glu-60 is a binding site for thiamine diphosphate.

In terms of assembly, heterodimer of an alpha and a beta chain. It depends on thiamine diphosphate as a cofactor.

It catalyses the reaction N(6)-[(R)-lipoyl]-L-lysyl-[protein] + pyruvate + H(+) = N(6)-[(R)-S(8)-acetyldihydrolipoyl]-L-lysyl-[protein] + CO2. Functionally, the pyruvate dehydrogenase complex catalyzes the overall conversion of pyruvate to acetyl-CoA and CO(2). It contains multiple copies of three enzymatic components: pyruvate dehydrogenase (E1), dihydrolipoamide acetyltransferase (E2) and lipoamide dehydrogenase (E3). The chain is Pyruvate dehydrogenase E1 component subunit beta (pdhB) from Staphylococcus epidermidis (strain ATCC 35984 / DSM 28319 / BCRC 17069 / CCUG 31568 / BM 3577 / RP62A).